We begin with the raw amino-acid sequence, 134 residues long: UPF0715 membrane protein YoaG (134 aa).

The next 4 membrane-spanning stretches (helical) occupy residues 9-29 (LMTLGLSSLTFGLLLGFYSFV), 35-55 (IIALFTAAIALLYGFVVYGLF), 72-92 (VMYLLIYSVVAFIAAFLFFVI), and 106-126 (FYYMLSIAAAVIYWLWDSLIL).

This sequence belongs to the UPF0715 family.

It localises to the cell membrane. This Bacillus subtilis (strain 168) protein is UPF0715 membrane protein YoaG (yoaG).